The primary structure comprises 182 residues: MTSNQKAILAGGCFWGLQDLIRNQPGVVSTRVGYSGGNIPNATYRNHGTHAEAVEIIFDPTVTDYRTLLEFFFQIHDPTTKDRQGNDRGTSYRSAIFYFDEQQKRIALDTIADVEASGLWPGKVVTEVSPAGDFWEAEPEHQDYLQRYPNGYTCHFVRPGWRLPRRTAESALRASLSPELGT.

Residue cysteine 13 is part of the active site.

Belongs to the MsrA Met sulfoxide reductase family.

The enzyme catalyses L-methionyl-[protein] + [thioredoxin]-disulfide + H2O = L-methionyl-(S)-S-oxide-[protein] + [thioredoxin]-dithiol. The catalysed reaction is [thioredoxin]-disulfide + L-methionine + H2O = L-methionine (S)-S-oxide + [thioredoxin]-dithiol. Its function is as follows. Has an important function as a repair enzyme for proteins that have been inactivated by oxidation. Catalyzes the reversible oxidation-reduction of methionine sulfoxide in proteins to methionine. The sequence is that of Peptide methionine sulfoxide reductase MsrA from Mycobacterium bovis (strain ATCC BAA-935 / AF2122/97).